Reading from the N-terminus, the 62-residue chain is SPbeta prophage-derived uncharacterized protein YonU (62 aa).

Residues 1–32 are a coiled coil; it reads MEKKFLDAIQQLTKELEMLKKDIDSIKEATVR.

The polypeptide is SPbeta prophage-derived uncharacterized protein YonU (yonU) (Bacillus subtilis (strain 168)).